The chain runs to 229 residues: uncharacterized protein (229 aa).

The next 7 membrane-spanning stretches (helical) occupy residues 21-41, 56-76, 83-103, 109-129, 141-161, 162-182, and 202-222; these read IYSLVGMGVGLSAFVSYLMLY, MIYYGAAIIELILVFVASGAA, ALPIFLIYAALNGFTLSFIIV, TVFQAFLSSAAVFFAMSIIGV, AMFAALIGVVVASLINLFIGS, GMMSYVISVISVLIFSGLIAS, and WAVAMALSLYLDFINLFISLL.

It belongs to the BI1 family.

It is found in the cell membrane. This is an uncharacterized protein from Streptococcus pyogenes serotype M3 (strain ATCC BAA-595 / MGAS315).